Reading from the N-terminus, the 311-residue chain is Aspartate carbamoyltransferase catalytic subunit (311 aa).

2 residues coordinate carbamoyl phosphate: Arg59 and Thr60. Position 87 (Lys87) interacts with L-aspartate. 3 residues coordinate carbamoyl phosphate: Arg109, His139, and Gln142. The L-aspartate site is built by Arg172 and Arg224. Positions 265 and 266 each coordinate carbamoyl phosphate.

This sequence belongs to the aspartate/ornithine carbamoyltransferase superfamily. ATCase family. As to quaternary structure, heterododecamer (2C3:3R2) of six catalytic PyrB chains organized as two trimers (C3), and six regulatory PyrI chains organized as three dimers (R2).

It carries out the reaction carbamoyl phosphate + L-aspartate = N-carbamoyl-L-aspartate + phosphate + H(+). The protein operates within pyrimidine metabolism; UMP biosynthesis via de novo pathway; (S)-dihydroorotate from bicarbonate: step 2/3. Its function is as follows. Catalyzes the condensation of carbamoyl phosphate and aspartate to form carbamoyl aspartate and inorganic phosphate, the committed step in the de novo pyrimidine nucleotide biosynthesis pathway. The chain is Aspartate carbamoyltransferase catalytic subunit from Streptococcus equi subsp. zooepidemicus (strain MGCS10565).